The sequence spans 344 residues: Sensor histidine kinase GraS (344 aa).

A run of 2 helical transmembrane segments spans residues 18–38 (IFWI…DYDI) and 43–63 (IGFI…FTFL). In terms of domain architecture, Histidine kinase spans 126-332 (EFVHDIKTPV…TFVLTFPKQN (207 aa)). His-129 is subject to Phosphohistidine; by autocatalysis.

In terms of processing, autophosphorylated.

The protein localises to the cell membrane. The catalysed reaction is ATP + protein L-histidine = ADP + protein N-phospho-L-histidine.. Member of the two-component regulatory system GraR/GraS involved in resistance against cationic antimicrobial peptides (CAMPs). GraS probably functions as a sensor protein kinase which is autophosphorylated at a histidine residue and transfers its phosphate group to GraR. This chain is Sensor histidine kinase GraS (graS), found in Staphylococcus haemolyticus (strain JCSC1435).